Reading from the N-terminus, the 218-residue chain is GTP cyclohydrolase 1 (218 aa).

3 residues coordinate Zn(2+): cysteine 109, histidine 112, and cysteine 180.

It belongs to the GTP cyclohydrolase I family. Toroid-shaped homodecamer, composed of two pentamers of five dimers.

The enzyme catalyses GTP + H2O = 7,8-dihydroneopterin 3'-triphosphate + formate + H(+). Its pathway is cofactor biosynthesis; 7,8-dihydroneopterin triphosphate biosynthesis; 7,8-dihydroneopterin triphosphate from GTP: step 1/1. The sequence is that of GTP cyclohydrolase 1 from Haemophilus ducreyi (strain 35000HP / ATCC 700724).